The following is a 204-amino-acid chain: Inner membrane-spanning protein YciB (204 aa).

5 consecutive transmembrane segments (helical) span residues 48–68, 73–93, 102–122, 147–167, and 170–190; these read ILFA…LYFF, FESM…ATLM, WKPT…QLFT, GAWI…AYAF, and AVWV…FVVG.

The protein belongs to the YciB family.

It is found in the cell inner membrane. Its function is as follows. Plays a role in cell envelope biogenesis, maintenance of cell envelope integrity and membrane homeostasis. This chain is Inner membrane-spanning protein YciB, found in Nitrosococcus oceani (strain ATCC 19707 / BCRC 17464 / JCM 30415 / NCIMB 11848 / C-107).